The chain runs to 152 residues: Ribosome maturation factor RimP (152 aa).

It belongs to the RimP family.

Its subcellular location is the cytoplasm. Functionally, required for maturation of 30S ribosomal subunits. The sequence is that of Ribosome maturation factor RimP from Burkholderia lata (strain ATCC 17760 / DSM 23089 / LMG 22485 / NCIMB 9086 / R18194 / 383).